Consider the following 121-residue polypeptide: Surface glycoprotein CD59 homolog (121 aa).

The signal sequence occupies residues 1-19 (MYILFTLVLTFVFCKPIHS). The 85-residue stretch at 20–104 (LQCYNCSHST…ENIKRTISDK (85 aa)) folds into the UPAR/Ly6 domain. 5 disulfide bridges follow: Cys22–Cys45, Cys25–Cys32, Cys38–Cys58, Cys64–Cys82, and Cys83–Cys88. Asn24 carries N-linked (GlcNAc...) asparagine; by host glycosylation. Asn96 is lipidated: GPI-anchor amidated asparagine; by host. Positions 97–121 (IKRTISDKALLLLALFLVTAWNFPL) are cleaved as a propeptide — removed in mature form.

It localises to the host cell membrane. This chain is Surface glycoprotein CD59 homolog (15), found in Saimiriine herpesvirus 2 (strain 11) (SaHV-2).